A 225-amino-acid polypeptide reads, in one-letter code: MTAPPSLQAKAVGIGMTSQRVRDRLVERLRECGIQDERVLSTIRIVPRHLFIDEALALRAYEDTALPIGHGQTISQPWVVARMTEAVMQVVPKKILEIGTGSGYQSAILASLGLEVYTIERIGKLLRQARKRFRQLGIKIRSKHDDGSTGWTEHAPYNAILVTAAAPTLIDTLIEQLAIGGRLVAPVGTASEQALVQLTRTIDGSITHEILEPVTFVSLLPGMLD.

Residue S75 is part of the active site.

Belongs to the methyltransferase superfamily. L-isoaspartyl/D-aspartyl protein methyltransferase family.

It is found in the cytoplasm. The catalysed reaction is [protein]-L-isoaspartate + S-adenosyl-L-methionine = [protein]-L-isoaspartate alpha-methyl ester + S-adenosyl-L-homocysteine. In terms of biological role, catalyzes the methyl esterification of L-isoaspartyl residues in peptides and proteins that result from spontaneous decomposition of normal L-aspartyl and L-asparaginyl residues. It plays a role in the repair and/or degradation of damaged proteins. This is Protein-L-isoaspartate O-methyltransferase from Xylella fastidiosa (strain M23).